Consider the following 549-residue polypeptide: Fas-activated serine/threonine kinase (549 aa).

Residues 1–30 (MRRPRGEPGPRAPRPTEGATCAGPGESWSP) form a disordered region. One can recognise an RAP domain in the interval 477-535 (VVLVLRERWHFCRDGRVLLGSRALRERHLGLMGYQLLPLPFEELESQRGLPQLKSYLRQ).

This sequence belongs to the FAST protein kinase family. Interacts with TIA1; the interactions leads to TIA1 phosphorylation. Interacts with TIAR. Post-translationally, autophosphorylated on serine/threonine residues. Activated by dephosphorylation. Expressed in heart, brain, placenta, lung, liver, skeletal muscle, kidney and pancreas.

Its subcellular location is the mitochondrion matrix. The catalysed reaction is L-seryl-[Fas-activated protein] + ATP = O-phospho-L-seryl-[Fas-activated protein] + ADP + H(+). It carries out the reaction L-threonyl-[Fas-activated protein] + ATP = O-phospho-L-threonyl-[Fas-activated protein] + ADP + H(+). It catalyses the reaction L-seryl-[protein] + ATP = O-phospho-L-seryl-[protein] + ADP + H(+). The enzyme catalyses L-threonyl-[protein] + ATP = O-phospho-L-threonyl-[protein] + ADP + H(+). Functionally, phosphorylates the splicing regulator TIA1, thereby promoting the inclusion of FAS exon 6, which leads to an mRNA encoding a pro-apoptotic form of the receptor. Required for the biogenesis of some mitochondrial-encoded mRNAs, specifically stabilizes ND6 (NADH dehydrogenase complex subunit 6) mRNA, and regulates its levels. In Homo sapiens (Human), this protein is Fas-activated serine/threonine kinase (FASTK).